We begin with the raw amino-acid sequence, 374 residues long: uncharacterized protein (374 aa).

The protein belongs to the mimivirus L41 family.

This is an uncharacterized protein from Acanthamoeba polyphaga (Amoeba).